The sequence spans 445 residues: Response regulator protein PilR (445 aa).

In terms of domain architecture, Response regulatory spans 5–119 (KALIVDDEPD…RLRELVATAL (115 aa)). A 4-aspartylphosphate mark is found at D11 and D54. One can recognise a Sigma-54 factor interaction domain in the interval 135-364 (LLGESPPMRA…LENMLERAYT (230 aa)). ATP contacts are provided by residues 163–170 (GESGSGKE) and 226–235 (ASGGTLFLDE). Residues 418 to 437 (RWNRTAAAQRLGLTFRSMRY) constitute a DNA-binding region (H-T-H motif).

Post-translationally, phosphorylated by PilS.

It is found in the cytoplasm. Functionally, member of the two-component regulatory system PilS/PilR that regulates the expression of multiple genes including the type IV pilus (T4P) major subunit PilA. Thereby, plays a major role in the regulation of multiple motility pathways. Upon appropriate environmental signals, the histidine kinase PilS transfers the phosphoryl group onto PilR. In turn, PilR functions as a transcriptional activator by direct binding to a cis-acting sequence upstream of the pilin gene promoter leading to its activation. The sequence is that of Response regulator protein PilR (pilR) from Pseudomonas aeruginosa (strain ATCC 15692 / DSM 22644 / CIP 104116 / JCM 14847 / LMG 12228 / 1C / PRS 101 / PAO1).